We begin with the raw amino-acid sequence, 830 residues long: Interleukin-4 receptor subunit alpha (830 aa).

The N-terminal stretch at 1–32 is a signal peptide; sequence MGWLCPGLTFSVSCLILVWAAGSGVTCVSPGG. Over 33-240 the chain is Extracellular; sequence VRVLEWPICL…NYYEEPLEQR (208 aa). Cys-41 and Cys-51 are disulfide-bonded. N-linked (GlcNAc...) asparagine glycans are attached at residues Asn-60 and Asn-78. Cys-82 and Cys-94 are disulfide-bonded. N-linked (GlcNAc...) asparagine glycosylation is found at Asn-120, Asn-142, and Asn-170. Positions 133–232 constitute a Fibronectin type-III domain; it reads APRNLMVHAN…WSPSVKWLNY (100 aa). A Phosphoserine modification is found at Ser-172. 2 N-linked (GlcNAc...) asparagine glycosylation sites follow: Asn-184 and Asn-217. The short motif at 220 to 224 is the WSXWS motif element; it reads WSEWS. Residues 241-264 traverse the membrane as a helical segment; the sequence is LPLGVSISCVVILIICLSCYFGII. The Cytoplasmic portion of the chain corresponds to 265-830; it reads RIKKEWWDQI…SPGPACMDTS (566 aa). A Box 1 motif motif is present at residues 270–278; the sequence is WWDQIPNPA. Residues 378–387 are compositionally biased toward acidic residues; the sequence is ENEEEEEEED. Disordered stretches follow at residues 378 to 403 and 450 to 488; these read ENEE…GSFQ and MPWA…SLAS. Residues 444–564 form a required for IRS1 activation and IL4-induced cell growth region; the sequence is ENASAPMPWA…ETWEQILRQS (121 aa). Residue Tyr-504 is modified to Phosphotyrosine. Disordered regions lie at residues 508-610 and 623-696; these read STFL…EAGY and CPGT…DGQK. Acidic residues predominate over residues 518–534; that stretch reads GELDSDPELAEALEEVE. Over residues 538–551 the composition is skewed to pro residues; that stretch reads PAAPQPSEPPPTLQ. Positions 564–662 are required for IL4-induced gene expression; it reads SVLQRRAAPA…VPTPLFTFGL (99 aa). Positions 570–582 are enriched in low complexity; that stretch reads AAPAPASGPSSSG. Residues Tyr-583 and Tyr-610 each carry the phosphotyrosine modification. Positions 623-635 are enriched in polar residues; that stretch reads CPGTSGLEPSSGE. A Phosphotyrosine modification is found at Tyr-638. Pro residues-rich tracts occupy residues 646–655 and 665–676; these read PGCPETPVPT and EPPPSPQNPPFP. The short motif at 716–721 is the ITIM motif element; that stretch reads IVYSAL. Positions 811-830 are disordered; sequence SQTPTAVAMLSPGPACMDTS.

This sequence belongs to the type I cytokine receptor family. Type 4 subfamily. The functional IL4 receptor is formed by initial binding of IL4 to IL4R. Subsequent recruitment to the complex of the common gamma chain, in immune cells, creates a type I receptor and, in non-immune cells, of IL13RA1 forms a type II receptor. IL4R can also interact with the IL13/IL13RA1 complex to form a similar type II receptor. Interacts with PIK3C3. Interacts with the SH2-containing phosphatases, PTPN6/SHIP1, PTPN11/SHIP2 and INPP5D/SHIP. Interacts with JAK1 through a Box 1-containing region; inhibited by SOCS5. Interacts with SOCS5; inhibits IL4 signaling. Interacts with JAK3. Interacts with CLM1. Interacts with IL13RA2. In terms of processing, on IL4 binding, phosphorylated on C-terminal tyrosine residues.

The protein localises to the membrane. Its function is as follows. Receptor for both interleukin 4 and interleukin 13. Couples to the JAK1/2/3-STAT6 pathway. The IL4 response is involved in promoting Th2 differentiation. The IL4/IL13 responses are involved in regulating IgE production and, chemokine and mucus production at sites of allergic inflammation. In certain cell types, can signal through activation of insulin receptor substrates, IRS1/IRS2. This is Interleukin-4 receptor subunit alpha (IL4R) from Sus scrofa (Pig).